The primary structure comprises 77 residues: Major outer membrane lipoprotein Lpp (77 aa).

An N-terminal signal peptide occupies residues M1–G19. C20 carries N-palmitoyl cysteine lipidation. Residue C20 is the site of S-diacylglycerol cysteine attachment. 2 consecutive repeats follow at residues N23–V33 and N37–V47. A coiled-coil region spans residues I26–A74. Positions A56–K77 are disordered. N6-murein peptidoglycan lysine is present on K77.

This sequence belongs to the Lpp family. Homotrimer.

It is found in the cell outer membrane. The protein localises to the secreted. It localises to the cell wall. Its function is as follows. A highly abundant outer membrane lipoprotein that controls the distance between the inner and outer membranes. The only protein known to be covalently linked to the peptidoglycan network (PGN). Also non-covalently binds the PGN. The link between the cell outer membrane and PGN contributes to maintenance of the structural and functional integrity of the cell envelope, and maintains the correct distance between the PGN and the outer membrane. The protein is Major outer membrane lipoprotein Lpp of Serratia marcescens.